The following is a 630-amino-acid chain: 1-deoxy-D-xylulose-5-phosphate synthase (630 aa).

Residues H72 and 113 to 115 (GHS) contribute to the thiamine diphosphate site. D144 contacts Mg(2+). Thiamine diphosphate-binding positions include 145 to 146 (GA), N173, Y284, and E367. Residue N173 participates in Mg(2+) binding.

This sequence belongs to the transketolase family. DXPS subfamily. As to quaternary structure, homodimer. Mg(2+) serves as cofactor. Requires thiamine diphosphate as cofactor.

It carries out the reaction D-glyceraldehyde 3-phosphate + pyruvate + H(+) = 1-deoxy-D-xylulose 5-phosphate + CO2. It functions in the pathway metabolic intermediate biosynthesis; 1-deoxy-D-xylulose 5-phosphate biosynthesis; 1-deoxy-D-xylulose 5-phosphate from D-glyceraldehyde 3-phosphate and pyruvate: step 1/1. Catalyzes the acyloin condensation reaction between C atoms 2 and 3 of pyruvate and glyceraldehyde 3-phosphate to yield 1-deoxy-D-xylulose-5-phosphate (DXP). This Bacillus cereus (strain AH187) protein is 1-deoxy-D-xylulose-5-phosphate synthase.